We begin with the raw amino-acid sequence, 448 residues long: Glutamyl-tRNA reductase (448 aa).

Residues 49–52 (TCNR), Ser109, 114–116 (ETQ), and Gln120 contribute to the substrate site. Cys50 acts as the Nucleophile in catalysis. An NADP(+)-binding site is contributed by 189–194 (GAGEMS).

It belongs to the glutamyl-tRNA reductase family. As to quaternary structure, homodimer.

The enzyme catalyses (S)-4-amino-5-oxopentanoate + tRNA(Glu) + NADP(+) = L-glutamyl-tRNA(Glu) + NADPH + H(+). The protein operates within porphyrin-containing compound metabolism; protoporphyrin-IX biosynthesis; 5-aminolevulinate from L-glutamyl-tRNA(Glu): step 1/2. Its function is as follows. Catalyzes the NADPH-dependent reduction of glutamyl-tRNA(Glu) to glutamate 1-semialdehyde (GSA). In Staphylococcus aureus (strain Mu3 / ATCC 700698), this protein is Glutamyl-tRNA reductase.